Reading from the N-terminus, the 211-residue chain is tRNA (guanine-N(7)-)-methyltransferase (211 aa).

Glutamate 44, aspartate 69, aspartate 96, and aspartate 118 together coordinate S-adenosyl-L-methionine. The active site involves aspartate 118. Lysine 122 is a binding site for substrate. Residues 124–129 (KHEKRR) form an interaction with RNA region. Substrate contacts are provided by residues aspartate 154 and 191–194 (TEYE).

This sequence belongs to the class I-like SAM-binding methyltransferase superfamily. TrmB family.

It catalyses the reaction guanosine(46) in tRNA + S-adenosyl-L-methionine = N(7)-methylguanosine(46) in tRNA + S-adenosyl-L-homocysteine. It functions in the pathway tRNA modification; N(7)-methylguanine-tRNA biosynthesis. Its function is as follows. Catalyzes the formation of N(7)-methylguanine at position 46 (m7G46) in tRNA. In Streptococcus pyogenes serotype M12 (strain MGAS2096), this protein is tRNA (guanine-N(7)-)-methyltransferase.